The following is a 126-amino-acid chain: Small ribosomal subunit protein uS12 (126 aa).

A 3-methylthioaspartic acid modification is found at Asp-89. The interval 106-126 (GVRERRRSRSKYGAKMPRSAA) is disordered.

The protein belongs to the universal ribosomal protein uS12 family. In terms of assembly, part of the 30S ribosomal subunit. Contacts proteins S8 and S17. May interact with IF1 in the 30S initiation complex.

Functionally, with S4 and S5 plays an important role in translational accuracy. Its function is as follows. Interacts with and stabilizes bases of the 16S rRNA that are involved in tRNA selection in the A site and with the mRNA backbone. Located at the interface of the 30S and 50S subunits, it traverses the body of the 30S subunit contacting proteins on the other side and probably holding the rRNA structure together. The combined cluster of proteins S8, S12 and S17 appears to hold together the shoulder and platform of the 30S subunit. The sequence is that of Small ribosomal subunit protein uS12 from Tremblaya princeps.